A 400-amino-acid polypeptide reads, in one-letter code: Enoyl-[acyl-carrier-protein] reductase [NADH] (400 aa).

NAD(+) contacts are provided by residues 48–53 (GSSSGY), 74–75 (FE), 111–112 (DA), and 139–140 (LA). Residue Tyr-225 coordinates substrate. Tyr-235 functions as the Proton donor in the catalytic mechanism. Residues Lys-244 and 273 to 275 (VVT) contribute to the NAD(+) site.

The protein belongs to the TER reductase family. Monomer.

It catalyses the reaction a 2,3-saturated acyl-[ACP] + NAD(+) = a (2E)-enoyl-[ACP] + NADH + H(+). It functions in the pathway lipid metabolism; fatty acid biosynthesis. Its function is as follows. Involved in the final reduction of the elongation cycle of fatty acid synthesis (FAS II). Catalyzes the reduction of a carbon-carbon double bond in an enoyl moiety that is covalently linked to an acyl carrier protein (ACP). This Shewanella pealeana (strain ATCC 700345 / ANG-SQ1) protein is Enoyl-[acyl-carrier-protein] reductase [NADH].